Reading from the N-terminus, the 356-residue chain is Protein MGF 360-3L (356 aa).

The ANK repeat unit spans residues 61–93 (KLNTALVLAVKENNDDLIMLFTEWGANINYGLL).

The protein belongs to the asfivirus MGF 360 family.

Its function is as follows. Plays a role in virus cell tropism, and may be required for efficient virus replication in macrophages. The sequence is that of Protein MGF 360-3L from Ornithodoros (relapsing fever ticks).